The chain runs to 155 residues: Large ribosomal subunit protein uL22c (155 aa).

Belongs to the universal ribosomal protein uL22 family. Part of the 50S ribosomal subunit.

The protein resides in the plastid. It is found in the chloroplast. This protein binds specifically to 23S rRNA. Functionally, the globular domain of the protein is located near the polypeptide exit tunnel on the outside of the subunit, while an extended beta-hairpin is found that lines the wall of the exit tunnel in the center of the 70S ribosome. The sequence is that of Large ribosomal subunit protein uL22c (rpl22) from Atropa belladonna (Belladonna).